The sequence spans 406 residues: Aspartokinase (406 aa).

The region spanning 342–406 (IIGHGIKNDL…LLKISETGHC (65 aa)) is the ACT domain.

This sequence belongs to the aspartokinase family.

It catalyses the reaction L-aspartate + ATP = 4-phospho-L-aspartate + ADP. The protein operates within amino-acid biosynthesis; L-lysine biosynthesis via DAP pathway; (S)-tetrahydrodipicolinate from L-aspartate: step 1/4. Its pathway is amino-acid biosynthesis; L-methionine biosynthesis via de novo pathway; L-homoserine from L-aspartate: step 1/3. It participates in amino-acid biosynthesis; L-threonine biosynthesis; L-threonine from L-aspartate: step 1/5. The sequence is that of Aspartokinase (lysC) from Rickettsia bellii (strain RML369-C).